We begin with the raw amino-acid sequence, 236 residues long: Sugar fermentation stimulation protein homolog (236 aa).

Belongs to the SfsA family.

The chain is Sugar fermentation stimulation protein homolog from Paramagnetospirillum magneticum (strain ATCC 700264 / AMB-1) (Magnetospirillum magneticum).